Here is a 652-residue protein sequence, read N- to C-terminus: Carboxypeptidase S1 homolog A (652 aa).

An N-terminal signal peptide occupies residues 1–19 (MRLAASIAVALPVIGAASA). Residues Cys-50 and Cys-121 are joined by a disulfide bond. N-linked (GlcNAc...) asparagine glycans are attached at residues Asn-77, Asn-132, Asn-161, Asn-168, Asn-184, and Asn-202. Ser-238 is an active-site residue. N-linked (GlcNAc...) asparagine glycosylation is found at Asn-260, Asn-299, Asn-347, and Asn-410. 2 cysteine pairs are disulfide-bonded: Cys-325/Cys-361 and Cys-332/Cys-354. The active site involves Asp-458. Cys-461 contributes to the substrate binding site. Residues Asn-474, Asn-492, and Asn-505 are each glycosylated (N-linked (GlcNAc...) asparagine). His-516 is a catalytic residue. A substrate-binding site is contributed by Glu-517. N-linked (GlcNAc...) asparagine glycosylation occurs at Asn-594. Positions 608–628 (AASKGNPPPTTTSSPTASPTA) are disordered. The span at 618–628 (TTSSPTASPTA) shows a compositional bias: low complexity. A lipid anchor (GPI-anchor amidated glycine) is attached at Gly-629. Positions 630 to 652 (SAMLKAPVAMLAISALTVLAFYL) are cleaved as a propeptide — removed in mature form.

It belongs to the peptidase S10 family.

It is found in the cell membrane. It catalyses the reaction Preferential release of a C-terminal arginine or lysine residue.. Functionally, extracellular serine carboxypeptidase that contributes to pathogenicity. This Trichophyton verrucosum (strain HKI 0517) protein is Carboxypeptidase S1 homolog A (SCPA).